We begin with the raw amino-acid sequence, 320 residues long: Cytochrome f (320 aa).

The signal sequence occupies residues 1 to 35 (MQTRNTFSWIREEITRSISVSLMIYIITWASISSA). 4 residues coordinate heme: Tyr-36, Cys-56, Cys-59, and His-60. Residues 286–306 (VQGLLFFLGSVVLAQIFLVLK) form a helical membrane-spanning segment.

Belongs to the cytochrome f family. As to quaternary structure, the 4 large subunits of the cytochrome b6-f complex are cytochrome b6, subunit IV (17 kDa polypeptide, petD), cytochrome f and the Rieske protein, while the 4 small subunits are PetG, PetL, PetM and PetN. The complex functions as a dimer. The cofactor is heme.

It is found in the plastid. The protein resides in the chloroplast thylakoid membrane. Its function is as follows. Component of the cytochrome b6-f complex, which mediates electron transfer between photosystem II (PSII) and photosystem I (PSI), cyclic electron flow around PSI, and state transitions. The chain is Cytochrome f from Lepidium virginicum (Virginia pepperweed).